A 337-amino-acid chain; its full sequence is F420-dependent glucose-6-phosphate dehydrogenase (337 aa).

Residue D40 coordinates coenzyme F420-(gamma-Glu)n. H41 acts as the Proton donor in catalysis. Residues T77 and 108-109 each bind coenzyme F420-(gamma-Glu)n; that span reads TG. E110 serves as the catalytic Proton acceptor. Coenzyme F420-(gamma-Glu)n is bound by residues N113, 178–179, and 181–182; these read GG and VV. Substrate contacts are provided by T196, K199, K260, and R284.

The protein belongs to the F420-dependent glucose-6-phosphate dehydrogenase family. In terms of assembly, homodimer.

It catalyses the reaction oxidized coenzyme F420-(gamma-L-Glu)(n) + D-glucose 6-phosphate + H(+) = 6-phospho-D-glucono-1,5-lactone + reduced coenzyme F420-(gamma-L-Glu)(n). Catalyzes the coenzyme F420-dependent oxidation of glucose 6-phosphate (G6P) to 6-phosphogluconolactone. The polypeptide is F420-dependent glucose-6-phosphate dehydrogenase (Rhodococcus hoagii (strain 103S) (Rhodococcus equi)).